We begin with the raw amino-acid sequence, 148 residues long: Meiosis inducing protein mei3 (148 aa).

Over residues 1-20 the composition is skewed to polar residues; it reads MSSQNTSNSRHPASSASALP. A disordered region spans residues 1-96; the sequence is MSSQNTSNSR…AQRIEHENKE (96 aa). Residues 21-46 show a composition bias toward low complexity; that stretch reads NRTNTARRSTSPRTSTGSSSTNTNTK. Basic residues predominate over residues 75–86; sequence PMKRTKRVRRTP.

Its function is as follows. Acts as a critical meiotic inducer by binding non-covalently to protein kinase ran1/pat1 inhibiting its enzymatic activity. Inhibits ran1/pat1 by acting as a pseudosubstrate for ran1/pat1 instead of its natural substrate ste11. Inactivation of the ran1/pat1 protein kinase is both necessary and sufficient to divert a vegetative cell from mitotic division to meiotic differentiation. This is Meiosis inducing protein mei3 from Schizosaccharomyces pombe (strain 972 / ATCC 24843) (Fission yeast).